The chain runs to 127 residues: Holo-[acyl-carrier-protein] synthase (127 aa).

Mg(2+) is bound by residues Asp-9 and Glu-58.

The protein belongs to the P-Pant transferase superfamily. AcpS family. The cofactor is Mg(2+).

The protein resides in the cytoplasm. It carries out the reaction apo-[ACP] + CoA = holo-[ACP] + adenosine 3',5'-bisphosphate + H(+). In terms of biological role, transfers the 4'-phosphopantetheine moiety from coenzyme A to a Ser of acyl-carrier-protein. This is Holo-[acyl-carrier-protein] synthase from Shewanella sp. (strain MR-4).